We begin with the raw amino-acid sequence, 507 residues long: Mandelamide hydrolase (507 aa).

Catalysis depends on charge relay system residues K100 and S180. The active-site Acyl-ester intermediate is S204.

Monomer.

It carries out the reaction (R)-mandelamide + H2O = (R)-mandelate + NH4(+). Its activity is regulated as follows. Inhibited by 3,4-dichloroisocoumarin and PMSF. Functionally, hydrolyzes both the R- and the S-enantiomers of mandelamide, and phenylacetamide. Has lower activity on 3-phenylpropionaide and lactamide. Does not hydrolyze benzamide. Hydrolyzes esters and amides with little steric bulk. Preferentially hydrolyzes aromatic substrates. This Pseudomonas putida (Arthrobacter siderocapsulatus) protein is Mandelamide hydrolase.